Consider the following 327-residue polypeptide: Gonadotropin-releasing hormone receptor (327 aa).

Residues Met-1 to Arg-38 are Extracellular-facing. N-linked (GlcNAc...) asparagine glycosylation is found at Asn-4 and Asn-18. The chain crosses the membrane as a helical span at residues Val-39 to Val-58. Residues Lys-59–Lys-77 are Cytoplasmic-facing. Residues Val-78–Leu-97 traverse the membrane as a helical segment. Residues Asp-98–Lys-115 lie on the Extracellular side of the membrane. The N-linked (GlcNAc...) asparagine glycan is linked to Asn-102. Cys-114 and Cys-195 are joined by a disulfide. A helical transmembrane segment spans residues Val-116–Leu-137. Residues Asp-138–Trp-164 are Cytoplasmic-facing. The chain crosses the membrane as a helical span at residues Ile-165 to Ala-184. Topologically, residues Asp-185–Asn-211 are extracellular. Residues Phe-212–Ala-231 form a helical membrane-spanning segment. Residues Lys-232–Thr-280 lie on the Cytoplasmic side of the membrane. The chain crosses the membrane as a helical span at residues Pro-281 to Val-299. Residues Ser-300–His-305 are Extracellular-facing. Residues Phe-306–Phe-325 form a helical membrane-spanning segment. Residues Ser-326–Leu-327 lie on the Cytoplasmic side of the membrane.

This sequence belongs to the G-protein coupled receptor 1 family.

The protein resides in the cell membrane. Its function is as follows. Receptor for gonadotropin releasing hormone (GnRH) that mediates the action of GnRH to stimulate the secretion of the gonadotropic hormones luteinizing hormone (LH) and follicle-stimulating hormone (FSH). This receptor mediates its action by association with G-proteins that activate a phosphatidylinositol-calcium second messenger system. This Rattus norvegicus (Rat) protein is Gonadotropin-releasing hormone receptor (Gnrhr).